The sequence spans 757 residues: Polyribonucleotide nucleotidyltransferase (757 aa).

Residues aspartate 525 and aspartate 531 each coordinate Mg(2+). A KH domain is found at 591-650 (PRVISVNIPVDKIGELIGPKGKTINAIQDETGADISIEEDGTVYIGAVDGPSADAARAQV). Residues 662–734 (GESFLGTVVK…DRGKLSLAPV (73 aa)) form the S1 motif domain. The tract at residues 737–757 (ETADQEGRDAASHGSEAPAEG) is disordered.

It belongs to the polyribonucleotide nucleotidyltransferase family. Mg(2+) serves as cofactor.

It localises to the cytoplasm. The catalysed reaction is RNA(n+1) + phosphate = RNA(n) + a ribonucleoside 5'-diphosphate. Involved in mRNA degradation. Catalyzes the phosphorolysis of single-stranded polyribonucleotides processively in the 3'- to 5'-direction. The chain is Polyribonucleotide nucleotidyltransferase from Clavibacter michiganensis subsp. michiganensis (strain NCPPB 382).